The chain runs to 530 residues: Autoinducer-2 kinase (530 aa).

Belongs to the FGGY kinase family.

The protein resides in the cytoplasm. It catalyses the reaction (S)-4,5-dihydroxypentane-2,3-dione + ATP = (2S)-2-hydroxy-3,4-dioxopentyl phosphate + ADP + H(+). Catalyzes the phosphorylation of autoinducer-2 (AI-2) to phospho-AI-2, which subsequently inactivates the transcriptional regulator LsrR and leads to the transcription of the lsr operon. Phosphorylates the ring-open form of (S)-4,5-dihydroxypentane-2,3-dione (DPD), which is the precursor to all AI-2 signaling molecules, at the C5 position. This Escherichia coli (strain K12 / DH10B) protein is Autoinducer-2 kinase.